The chain runs to 457 residues: Glycine receptor subunit alpha-1 (457 aa).

The N-terminal stretch at 1-28 is a signal peptide; it reads MYSFNTLRLYLWETIVFFSLAASKEAEA. The Extracellular portion of the chain corresponds to 29 to 250; that stretch reads ARSASKPMSP…RFHLERQMGY (222 aa). Residue asparagine 66 is glycosylated (N-linked (GlcNAc...) asparagine). Arginine 93 and serine 157 together coordinate glycine. A disulfide bridge connects residues cysteine 166 and cysteine 180. Residues glutamate 220 and aspartate 222 each coordinate Zn(2+). Cysteine 226 and cysteine 237 are joined by a disulfide. Position 230-235 (230-235) interacts with strychnine; the sequence is YNTGKF. Threonine 232 contacts glycine. Residue histidine 243 participates in Zn(2+) binding. Residues 251-272 traverse the membrane as a helical segment; that stretch reads YLIQMYIPSLLIVILSWISFWI. Residues 273–277 lie on the Cytoplasmic side of the membrane; the sequence is NMDAA. The helical transmembrane segment at 278–298 threads the bilayer; that stretch reads PARVGLGITTVLTMTTQSSGS. Residues 299–309 lie on the Extracellular side of the membrane; it reads RASLPKVSYVK. Residues 310–330 traverse the membrane as a helical segment; sequence AIDIWMAVCLLFVFSALLEYA. The Cytoplasmic portion of the chain corresponds to 331–425; the sequence is AVNFVSRQHK…FIQRAKKIDK (95 aa). Residues 391-410 form a disordered region; that stretch reads KGANNSNTTNPPPAPSKSPE. Residues 426 to 446 traverse the membrane as a helical segment; the sequence is ISRIGFPMAFLIFNMFYWIIY. The Extracellular portion of the chain corresponds to 447 to 457; it reads KIVRREDVHNQ.

It belongs to the ligand-gated ion channel (TC 1.A.9) family. Glycine receptor (TC 1.A.9.3) subfamily. GLRA1 sub-subfamily. In terms of assembly, interacts with GLRB to form heteropentameric channels; this is probably the predominant form in vivo. Heteropentamer composed of four GLRA1 subunits and one GLRB subunit. Heteropentamer composed of two GLRA1 and three GLRB. Heteropentamer composed of three GLRA1 and two GLRB. Homopentamer (in vitro). Both homopentamers and heteropentamers form functional ion channels, but their characteristics are subtly different. Detected on spinal cord neurons (at protein level). Detected in spinal cord.

It localises to the postsynaptic cell membrane. It is found in the synapse. The protein localises to the perikaryon. Its subcellular location is the cell projection. The protein resides in the dendrite. It localises to the cell membrane. It carries out the reaction chloride(in) = chloride(out). Its activity is regulated as follows. Channel opening is triggered by extracellular glycine. Channel characteristics depend on the subunit composition; heteropentameric channels are activated by lower glycine levels and display faster desensitization. Functionally, subunit of heteromeric glycine-gated chloride channels. Plays an important role in the down-regulation of neuronal excitability. Contributes to the generation of inhibitory postsynaptic currents. Channel activity is potentiated by ethanol. Potentiation of channel activity by intoxicating levels of ethanol contribute to the sedative effects of ethanol. The sequence is that of Glycine receptor subunit alpha-1 (GLRA1) from Bos taurus (Bovine).